Consider the following 458-residue polypeptide: Bifunctional protein GlmU (458 aa).

Residues 1–229 (MTNYAIILAA…FNESLGVNDR (229 aa)) form a pyrophosphorylase region. Residues 8–11 (LAAG), K22, Q72, and 77–78 (GT) contribute to the UDP-N-acetyl-alpha-D-glucosamine site. D102 provides a ligand contact to Mg(2+). UDP-N-acetyl-alpha-D-glucosamine is bound by residues G139, E154, N169, and N227. N227 is a Mg(2+) binding site. Residues 230 to 250 (VALATAESVMRRRINKAHMIN) are linker. Positions 251-458 (GVTFQNPDAT…AKRLPHYPQK (208 aa)) are N-acetyltransferase. Residues R332 and K350 each contribute to the UDP-N-acetyl-alpha-D-glucosamine site. H362 functions as the Proton acceptor in the catalytic mechanism. Positions 365 and 376 each coordinate UDP-N-acetyl-alpha-D-glucosamine. Acetyl-CoA contacts are provided by residues A379, 385 to 386 (NY), S404, A422, and R439.

This sequence in the N-terminal section; belongs to the N-acetylglucosamine-1-phosphate uridyltransferase family. The protein in the C-terminal section; belongs to the transferase hexapeptide repeat family. Homotrimer. The cofactor is Mg(2+).

The protein localises to the cytoplasm. It carries out the reaction alpha-D-glucosamine 1-phosphate + acetyl-CoA = N-acetyl-alpha-D-glucosamine 1-phosphate + CoA + H(+). The enzyme catalyses N-acetyl-alpha-D-glucosamine 1-phosphate + UTP + H(+) = UDP-N-acetyl-alpha-D-glucosamine + diphosphate. Its pathway is nucleotide-sugar biosynthesis; UDP-N-acetyl-alpha-D-glucosamine biosynthesis; N-acetyl-alpha-D-glucosamine 1-phosphate from alpha-D-glucosamine 6-phosphate (route II): step 2/2. It functions in the pathway nucleotide-sugar biosynthesis; UDP-N-acetyl-alpha-D-glucosamine biosynthesis; UDP-N-acetyl-alpha-D-glucosamine from N-acetyl-alpha-D-glucosamine 1-phosphate: step 1/1. The protein operates within bacterial outer membrane biogenesis; LPS lipid A biosynthesis. In terms of biological role, catalyzes the last two sequential reactions in the de novo biosynthetic pathway for UDP-N-acetylglucosamine (UDP-GlcNAc). The C-terminal domain catalyzes the transfer of acetyl group from acetyl coenzyme A to glucosamine-1-phosphate (GlcN-1-P) to produce N-acetylglucosamine-1-phosphate (GlcNAc-1-P), which is converted into UDP-GlcNAc by the transfer of uridine 5-monophosphate (from uridine 5-triphosphate), a reaction catalyzed by the N-terminal domain. The sequence is that of Bifunctional protein GlmU from Streptococcus uberis (strain ATCC BAA-854 / 0140J).